Reading from the N-terminus, the 114-residue chain is Large ribosomal subunit protein P2 (114 aa).

The segment covering 74–83 has biased composition (gly residues); the sequence is AAAAGGGGGD. The disordered stretch occupies residues 74–114; it reads AAAAGGGGGDAPAAAAEEPKKEEKSEEESDEELGFSLFDDN. Residues 98 to 114 show a composition bias toward acidic residues; that stretch reads SEEESDEELGFSLFDDN.

The protein belongs to the eukaryotic ribosomal protein P1/P2 family. In terms of assembly, P1 and P2 exist as dimers at the large ribosomal subunit. Phosphorylated.

In terms of biological role, plays an important role in the elongation step of protein synthesis. This is Large ribosomal subunit protein P2 from Parthenium argentatum (Guayule rubber plant).